The chain runs to 612 residues: DNA mismatch repair protein MutL (612 aa).

The protein belongs to the DNA mismatch repair MutL/HexB family.

This protein is involved in the repair of mismatches in DNA. It is required for dam-dependent methyl-directed DNA mismatch repair. May act as a 'molecular matchmaker', a protein that promotes the formation of a stable complex between two or more DNA-binding proteins in an ATP-dependent manner without itself being part of a final effector complex. The protein is DNA mismatch repair protein MutL of Afipia carboxidovorans (strain ATCC 49405 / DSM 1227 / KCTC 32145 / OM5) (Oligotropha carboxidovorans).